Consider the following 211-residue polypeptide: Troponin I, cardiac muscle (211 aa).

Alanine 1 carries the post-translational modification N-acetylalanine. The interval 1-43 (ADESRDAAGEARPAPAPVRRRSSANYRAYATEPHAKSKKKISA) is disordered. Serine 4 is modified (phosphoserine). Serine 22 carries the post-translational modification Phosphoserine; by PHK, PKA and PKD/PRKD1. Serine 23 bears the Phosphoserine; by PKA and PKD/PRKD1 mark. At tyrosine 26 the chain carries Phosphotyrosine. A Phosphothreonine; by STK4/MST1 modification is found at threonine 31. Residues 32–79 (EPHAKSKKKISASRKLQLKTLMLQIAKQELEREAEERRGEKGRALSTR) are involved in binding TNC. 2 positions are modified to phosphoserine; by PKC/PRKCE: serine 42 and serine 44. Residue threonine 51 is modified to Phosphothreonine; by STK4/MST1. Serine 77 carries the post-translational modification Phosphoserine. Position 78 is a phosphothreonine (threonine 78). Threonine 129 and threonine 143 each carry phosphothreonine; by STK4/MST1. The segment at 129-150 (TQKIFDLRGKFKRPTLRLRVRI) is involved in binding TNC and actin. Phosphoserine; by PAK3 is present on serine 151. Threonine 182 carries the phosphothreonine modification. The residue at position 200 (serine 200) is a Phosphoserine.

Belongs to the troponin I family. As to quaternary structure, interacts with TRIM63. Binds to actin and tropomyosin. Interacts with STK4/MST1. Post-translationally, phosphorylated at Ser-22 and Ser-23 by PRKD1; phosphorylation reduces myofilament calcium sensitivity. Phosphorylated preferentially at Thr-31. Phosphorylation by STK4/MST1 alters its binding affinity to TNNC1 (cardiac Tn-C) and TNNT2 (cardiac Tn-T). Phosphorylated at Ser-42 and Ser-44 by PRKCE; phosphorylation increases myocardium contractile dysfunction. Ser-22 is one of three sites in the region of residues 1-48 that are phosphorylated by phosphorylase kinase.

Its function is as follows. Troponin I is the inhibitory subunit of troponin, the thin filament regulatory complex which confers calcium-sensitivity to striated muscle actomyosin ATPase activity. The protein is Troponin I, cardiac muscle (TNNI3) of Oryctolagus cuniculus (Rabbit).